The chain runs to 697 residues: Elongation factor G (697 aa).

The region spanning 8–290 (ERYRNIGIMA…AVLSYMPSPV (283 aa)) is the tr-type G domain. GTP contacts are provided by residues 17 to 24 (AHIDAGKT), 88 to 92 (DTPGH), and 142 to 145 (NKMD).

It belongs to the TRAFAC class translation factor GTPase superfamily. Classic translation factor GTPase family. EF-G/EF-2 subfamily.

The protein resides in the cytoplasm. In terms of biological role, catalyzes the GTP-dependent ribosomal translocation step during translation elongation. During this step, the ribosome changes from the pre-translocational (PRE) to the post-translocational (POST) state as the newly formed A-site-bound peptidyl-tRNA and P-site-bound deacylated tRNA move to the P and E sites, respectively. Catalyzes the coordinated movement of the two tRNA molecules, the mRNA and conformational changes in the ribosome. This Nitrosococcus oceani (strain ATCC 19707 / BCRC 17464 / JCM 30415 / NCIMB 11848 / C-107) protein is Elongation factor G.